Reading from the N-terminus, the 105-residue chain is NADH-quinone oxidoreductase subunit K (105 aa).

Transmembrane regions (helical) follow at residues 4–24 (LTHY…GVIV), 28–48 (IIVI…SLVA), and 66–86 (LSIF…ALIV).

It belongs to the complex I subunit 4L family. In terms of assembly, NDH-1 is composed of 14 different subunits. Subunits NuoA, H, J, K, L, M, N constitute the membrane sector of the complex.

It localises to the cell inner membrane. The catalysed reaction is a quinone + NADH + 5 H(+)(in) = a quinol + NAD(+) + 4 H(+)(out). Functionally, NDH-1 shuttles electrons from NADH, via FMN and iron-sulfur (Fe-S) centers, to quinones in the respiratory chain. The immediate electron acceptor for the enzyme in this species is believed to be ubiquinone. Couples the redox reaction to proton translocation (for every two electrons transferred, four hydrogen ions are translocated across the cytoplasmic membrane), and thus conserves the redox energy in a proton gradient. This Akkermansia muciniphila (strain ATCC BAA-835 / DSM 22959 / JCM 33894 / BCRC 81048 / CCUG 64013 / CIP 107961 / Muc) protein is NADH-quinone oxidoreductase subunit K.